The primary structure comprises 349 residues: Isopentenyl-diphosphate delta-isomerase (349 aa).

6–7 (RK) provides a ligand contact to substrate. FMN is bound by residues 62-64 (AMT), Ser-93, and Asn-122. A substrate-binding site is contributed by Gln-152. Glu-153 is a binding site for Mg(2+). FMN contacts are provided by residues Lys-184, Thr-214, 258 to 259 (GG), and 280 to 281 (AG).

Belongs to the IPP isomerase type 2 family. In terms of assembly, homooctamer. Dimer of tetramers. FMN is required as a cofactor. Requires NADPH as cofactor. Mg(2+) serves as cofactor.

Its subcellular location is the cytoplasm. The enzyme catalyses isopentenyl diphosphate = dimethylallyl diphosphate. Involved in the biosynthesis of isoprenoids. Catalyzes the 1,3-allylic rearrangement of the homoallylic substrate isopentenyl (IPP) to its allylic isomer, dimethylallyl diphosphate (DMAPP). In Bacillus cereus (strain ATCC 14579 / DSM 31 / CCUG 7414 / JCM 2152 / NBRC 15305 / NCIMB 9373 / NCTC 2599 / NRRL B-3711), this protein is Isopentenyl-diphosphate delta-isomerase.